Here is a 175-residue protein sequence, read N- to C-terminus: Peptide deformylase 1 (175 aa).

2 residues coordinate Fe cation: Cys-99 and His-141. The active site involves Glu-142. His-145 lines the Fe cation pocket.

This sequence belongs to the polypeptide deformylase family. It depends on Fe(2+) as a cofactor.

It catalyses the reaction N-terminal N-formyl-L-methionyl-[peptide] + H2O = N-terminal L-methionyl-[peptide] + formate. Functionally, removes the formyl group from the N-terminal Met of newly synthesized proteins. Requires at least a dipeptide for an efficient rate of reaction. N-terminal L-methionine is a prerequisite for activity but the enzyme has broad specificity at other positions. The sequence is that of Peptide deformylase 1 from Rickettsia conorii (strain ATCC VR-613 / Malish 7).